The following is a 140-amino-acid chain: Sex-regulated protein janus-B (140 aa).

Residue arginine 42 coordinates substrate. Catalysis depends on histidine 69, which acts as the Proton acceptor. 110 to 112 (SRT) provides a ligand contact to substrate.

Belongs to the janus family. As to expression, germline cells of adult males.

Its function is as follows. JanA and janB regulate somatic sex differentiation. This chain is Sex-regulated protein janus-B (janB), found in Drosophila melanogaster (Fruit fly).